Here is a 210-residue protein sequence, read N- to C-terminus: T-cell surface glycoprotein CD8 beta-2 chain (210 aa).

The signal sequence occupies residues 1 to 18 (MRPRLWLLLAAQLTVLHG). The Ig-like V-type domain maps to 19-132 (NSVLQQTPAY…ELTFGKGTQL (114 aa)). Over 19–170 (NSVLQQTPAY…ETQKGPLCSP (152 aa)) the chain is Extracellular. Cysteine 41 and cysteine 116 are disulfide-bonded. Asparagine 102 carries an N-linked (GlcNAc...) asparagine glycan. A helical transmembrane segment spans residues 171–191 (VTLGLLVAGVLVLLVSLGVAM). Topologically, residues 192 to 210 (HLCCRRRRARLRFMKQFYK) are cytoplasmic.

In terms of assembly, in general heterodimer of an alpha and a beta chain linked by two disulfide bonds.

The protein localises to the cell membrane. Functionally, identifies cytotoxic/suppressor T-cells that interact with MHC class I bearing targets. CD8 is thought to play a role in the process of T-cell mediated killing. The protein is T-cell surface glycoprotein CD8 beta-2 chain of Homo sapiens (Human).